The primary structure comprises 127 residues: Large ribosomal subunit protein bL12 (127 aa).

The protein belongs to the bacterial ribosomal protein bL12 family. As to quaternary structure, homodimer. Part of the ribosomal stalk of the 50S ribosomal subunit. Forms a multimeric L10(L12)X complex, where L10 forms an elongated spine to which 2 to 4 L12 dimers bind in a sequential fashion. Binds GTP-bound translation factors.

Forms part of the ribosomal stalk which helps the ribosome interact with GTP-bound translation factors. Is thus essential for accurate translation. The polypeptide is Large ribosomal subunit protein bL12 (Streptomyces griseus subsp. griseus (strain JCM 4626 / CBS 651.72 / NBRC 13350 / KCC S-0626 / ISP 5235)).